Here is a 517-residue protein sequence, read N- to C-terminus: Protein IQ-DOMAIN 13 (517 aa).

The calmodulin-binding stretch occupies residues 1–11; it reads MGKKGSWFSAI. 2 disordered regions span residues 1 to 60 and 81 to 147; these read MGKK…FLPI and VFRP…PRAV. Residues 40–49 are compositionally biased toward basic residues; it reads KKKKGFGKKL. Polar residues predominate over residues 89-99; it reads DRANSSSTSVA. A compositionally biased stretch (pro residues) spans 134–144; the sequence is PKPPSPKPPSP. IQ domains follow at residues 168 to 196 and 197 to 218; these read KNAY…GLVR and LQGV…KYMQ. Disordered stretches follow at residues 324-407 and 425-452; these read QPFR…LTSC and KLRA…SSFP. Low complexity predominate over residues 328 to 342; that stretch reads LTPTRPSLSPQPQSS. Polar residues predominate over residues 343–367; sequence NQNHFRLNNSFDTSTPNSSKSTFVT. Over residues 432–448 the composition is skewed to basic and acidic residues; sequence PKERMDRTPVSTNEKRR.

This sequence belongs to the IQD family. As to quaternary structure, binds to multiple calmodulin (CaM) in the presence of Ca(2+) and CaM-like proteins. In terms of tissue distribution, expressed in vessels of roots, cotyledons and leaves, as well as in trichomes.

It localises to the cell membrane. The protein localises to the cytoplasm. It is found in the cytoskeleton. Functionally, may be involved in cooperative interactions with calmodulins or calmodulin-like proteins. Recruits calmodulin proteins to microtubules, thus being a potential scaffold in cellular signaling and trafficking. Regulates the formation of oval xylem secondary cell-wall deposition pits through microtubule-dependent lateral inhibition of Rho GTPase domains, thus confining the area of active ROP domains within the lattice of the cortical microtubules. May associate with nucleic acids and regulate gene expression at the transcriptional or post-transcriptional level. This chain is Protein IQ-DOMAIN 13, found in Arabidopsis thaliana (Mouse-ear cress).